The sequence spans 190 residues: Iron-sulfur assembly protein 1 (190 aa).

Positions P49–I71 are disordered. Fe cation-binding residues include C116, C180, and C182.

This sequence belongs to the HesB/IscA family.

It localises to the mitochondrion matrix. Functionally, involved in the assembly of mitochondrial and cytoplasmic iron-sulfur proteins. Probably involved in the binding of an intermediate of Fe/S cluster assembly. The sequence is that of Iron-sulfur assembly protein 1 (isa1) from Schizosaccharomyces pombe (strain 972 / ATCC 24843) (Fission yeast).